The following is a 146-amino-acid chain: ATP synthase epsilon chain (146 aa).

The protein belongs to the ATPase epsilon chain family. As to quaternary structure, F-type ATPases have 2 components, CF(1) - the catalytic core - and CF(0) - the membrane proton channel. CF(1) has five subunits: alpha(3), beta(3), gamma(1), delta(1), epsilon(1). CF(0) has three main subunits: a, b and c.

The protein localises to the cell membrane. Functionally, produces ATP from ADP in the presence of a proton gradient across the membrane. The sequence is that of ATP synthase epsilon chain from Lactobacillus helveticus (strain DPC 4571).